A 494-amino-acid chain; its full sequence is MKKQAFSSEQYLNLQRDHILERINQFDGKLYLEFGGKMLEDFHAARVLPGYEPDNKIKLLQEFKDQVEVVIAINASNIEHSKARGDLGISYDQEVLRLIDKFNELNIYVGSVVITQYSGQPAADAFRNQLEKNGITSYIHYPIKGYPTDINHIISPEGMGKNDYIKTSRNLIVVTAPGPGSGKLATCLSNMYHDQINGIKSGYAKFETFPVWNLPLHHPVNLAYEAATADLDDVNMIDPFHLETYGKTTVNYNRDIEIFPVLKRMLERILGESPYASPTDMGVNMVGFAITDDEAAKEASKQEIIRRYYQTVLDFKNERVPETAVKKIELLMNDLGITPEDRQVVVAARAKAEETGGSALALELPNGQIVTGKNSELFGPTAAALINAIKTSAGIDKDTRLIEPEVVKPIQDLKIDHLGSRNPRLHSNEILIALAITAANNADAARAMKELSNLKGSEAHSTIILTDEDKNVLRKLGINVTFDPYYQYDKLYRK.

Belongs to the UPF0371 family.

In Streptococcus thermophilus (strain ATCC BAA-250 / LMG 18311), this protein is UPF0371 protein stu1377.